A 466-amino-acid polypeptide reads, in one-letter code: ATP synthase subunit beta (466 aa).

Residue 155 to 162 (GGAGVGKT) coordinates ATP.

The protein belongs to the ATPase alpha/beta chains family. In terms of assembly, F-type ATPases have 2 components, CF(1) - the catalytic core - and CF(0) - the membrane proton channel. CF(1) has five subunits: alpha(3), beta(3), gamma(1), delta(1), epsilon(1). CF(0) has three main subunits: a(1), b(2) and c(9-12). The alpha and beta chains form an alternating ring which encloses part of the gamma chain. CF(1) is attached to CF(0) by a central stalk formed by the gamma and epsilon chains, while a peripheral stalk is formed by the delta and b chains.

It is found in the cell inner membrane. It catalyses the reaction ATP + H2O + 4 H(+)(in) = ADP + phosphate + 5 H(+)(out). Produces ATP from ADP in the presence of a proton gradient across the membrane. The catalytic sites are hosted primarily by the beta subunits. This chain is ATP synthase subunit beta, found in Azoarcus sp. (strain BH72).